Reading from the N-terminus, the 1021-residue chain is Contactin-1 (1021 aa).

The signal sequence occupies residues 1–20 (MKTPLLVSHLLLISLTSCLG). 6 consecutive Ig-like C2-type domains span residues 41-131 (PIFE…ATLS), 137-223 (PFPP…KSVF), 241-326 (PADI…ARIY), 331-407 (PEWV…AELK), 413-500 (PTFE…GTLV), and 504-603 (PTRI…LVVR). 2 cysteine pairs are disulfide-bonded: C65–C114 and C158–C211. Residues N208 and N258 are each glycosylated (N-linked (GlcNAc...) asparagine). A disulfide bridge connects residues C263 and C310. N338 is a glycosylation site (N-linked (GlcNAc...) asparagine). 2 disulfides stabilise this stretch: C352/C391 and C436/C484. 4 N-linked (GlcNAc...) asparagine glycosylation sites follow: N457, N473, N494, and N521. C526 and C585 are joined by a disulfide. The N-linked (GlcNAc...) asparagine glycan is linked to N593. Fibronectin type-III domains lie at 608-706 (PPGG…TDGA), 711-808 (APSD…SAQD), 813-908 (APTE…APPS), and 909-1002 (QPPR…TLSS). Residues 695–719 (SIPSNRIKTDGAAPNVAPSDVGGGG) are disordered. A glycan (N-linked (GlcNAc...) asparagine) is linked at N935. Residue S1001 is the site of GPI-anchor amidated serine attachment. The propeptide at 1002–1021 (SGLLSLLLPSLGFLVFYSEF) is removed in mature form.

Belongs to the immunoglobulin superfamily. Contactin family. Monomer. Interacts with NOTCH1. Interacts with CNTNAP1 in cis form and TNR. Binds to the carbonic-anhydrase like domain of PTPRZ1. Detected in a complex with NRCAM and PTPRB. Interacts with TASOR. In terms of tissue distribution, expressed by neurons, oligodendrocytes and their progenitors (at protein level). Myelination regulates the expression being down-regulated when neurons are in contact with Schwann cells.

It is found in the cell membrane. In terms of biological role, contactins mediate cell surface interactions during nervous system development. Involved in the formation of paranodal axo-glial junctions in myelinated peripheral nerves and in the signaling between axons and myelinating glial cells via its association with CNTNAP1. Participates in oligodendrocytes generation by acting as a ligand of NOTCH1. Its association with NOTCH1 promotes NOTCH1 activation through the released notch intracellular domain (NICD) and subsequent translocation to the nucleus. Interaction with TNR induces a repulsion of neurons and an inhibition of neurite outgrowth. This Rattus norvegicus (Rat) protein is Contactin-1 (Cntn1).